The chain runs to 466 residues: Arginine biosynthesis bifunctional protein ArgJ, mitochondrial (466 aa).

6 residues coordinate substrate: threonine 194, lysine 223, threonine 234, glutamate 321, asparagine 461, and threonine 466. Catalysis depends on threonine 234, which acts as the Nucleophile.

Belongs to the ArgJ family. As to quaternary structure, heterodimer of an alpha and a beta chain. The alpha and beta chains are autoproteolytically processed from a single precursor protein within the mitochondrion.

The protein resides in the mitochondrion matrix. The catalysed reaction is N(2)-acetyl-L-ornithine + L-glutamate = N-acetyl-L-glutamate + L-ornithine. It catalyses the reaction L-glutamate + acetyl-CoA = N-acetyl-L-glutamate + CoA + H(+). It participates in amino-acid biosynthesis; L-arginine biosynthesis; L-ornithine and N-acetyl-L-glutamate from L-glutamate and N(2)-acetyl-L-ornithine (cyclic): step 1/1. Its pathway is amino-acid biosynthesis; L-arginine biosynthesis; N(2)-acetyl-L-ornithine from L-glutamate: step 1/4. Catalyzes two activities which are involved in the cyclic version of arginine biosynthesis: the synthesis of acetylglutamate from glutamate and acetyl-CoA, and of ornithine by transacetylation between acetylornithine and glutamate. This is Arginine biosynthesis bifunctional protein ArgJ, mitochondrial from Aspergillus fumigatus (strain ATCC MYA-4609 / CBS 101355 / FGSC A1100 / Af293) (Neosartorya fumigata).